The following is a 324-amino-acid chain: 3'-5' exoribonuclease YhaM (324 aa).

An HD domain is found at 163-279 (HVVSMLELAK…LHYIDNLDAK (117 aa)).

It belongs to the YhaM family.

Its function is as follows. Shows a 3'-5' exoribonuclease activity. This Geobacillus sp. (strain WCH70) protein is 3'-5' exoribonuclease YhaM.